A 158-amino-acid polypeptide reads, in one-letter code: Lysozyme C (158 aa).

An N-terminal signal peptide occupies residues 1 to 18 (MRVLPLALLVGLLAVSDA). Positions 19–150 (KVLGKCEFAR…DQYMAECWSR (132 aa)) constitute a C-type lysozyme domain. 4 disulfides stabilise this stretch: Cys24–Cys147, Cys46–Cys135, Cys80–Cys93, and Cys89–Cys107. Active-site residues include Glu51 and Asp68.

The protein belongs to the glycosyl hydrolase 22 family. In terms of assembly, monomer. Strongly expressed in gill and gonad, and marginally detectable in hemolymph and lymphoid organ. Not expressed in kidney, hepatopancreas or tail muscle.

Its subcellular location is the secreted. The enzyme catalyses Hydrolysis of (1-&gt;4)-beta-linkages between N-acetylmuramic acid and N-acetyl-D-glucosamine residues in a peptidoglycan and between N-acetyl-D-glucosamine residues in chitodextrins.. Functionally, lysozymes have primarily a bacteriolytic function; those in tissues and body fluids are associated with the monocyte-macrophage system and enhance the activity of immunoagents. Has bacteriolytic activity against Gram-positive bacterium M.luteus, and Gram-negative shrimp pathogenic bacteria V.alginolyticus, V.parahaemolyticus and V.vulnificus. May play a role in host defense. The sequence is that of Lysozyme C from Penaeus merguiensis (Banana prawn).